Consider the following 309-residue polypeptide: tRNA uridine(34) hydroxylase (309 aa).

Positions 130-224 constitute a Rhodanese domain; that stretch reads SDPDTIVIDT…YLEEVPQEES (95 aa). C184 functions as the Cysteine persulfide intermediate in the catalytic mechanism.

The protein belongs to the TrhO family.

The catalysed reaction is uridine(34) in tRNA + AH2 + O2 = 5-hydroxyuridine(34) in tRNA + A + H2O. Catalyzes oxygen-dependent 5-hydroxyuridine (ho5U) modification at position 34 in tRNAs. The protein is tRNA uridine(34) hydroxylase of Rhizobium etli (strain ATCC 51251 / DSM 11541 / JCM 21823 / NBRC 15573 / CFN 42).